Consider the following 188-residue polypeptide: Fructose-1-phosphate phosphatase YqaB (188 aa).

The active-site Nucleophile is the Asp11. Residues Asp11, Asp13, and Asp167 each coordinate Mg(2+). Asp11–Asp13 provides a ligand contact to substrate.

It belongs to the HAD-like hydrolase superfamily. CbbY/CbbZ/Gph/YieH family. The cofactor is Mg(2+). Requires Mn(2+) as cofactor. Co(2+) is required as a cofactor. It depends on Zn(2+) as a cofactor.

Functionally, catalyzes strongly the dephosphorylation of fructose-1-phosphate (Fru1P) and slightly the dephosphorylation of 6-phosphogluconate (6P-Glu). It has low beta-phosphoglucomutase activity. The sequence is that of Fructose-1-phosphate phosphatase YqaB (yqaB) from Escherichia coli (strain K12).